Reading from the N-terminus, the 269-residue chain is Putative pyruvate, phosphate dikinase regulatory protein (269 aa).

147-154 provides a ligand contact to ADP; it reads GLSRTSKT.

This sequence belongs to the pyruvate, phosphate/water dikinase regulatory protein family. PDRP subfamily.

The catalysed reaction is N(tele)-phospho-L-histidyl/L-threonyl-[pyruvate, phosphate dikinase] + ADP = N(tele)-phospho-L-histidyl/O-phospho-L-threonyl-[pyruvate, phosphate dikinase] + AMP + H(+). It catalyses the reaction N(tele)-phospho-L-histidyl/O-phospho-L-threonyl-[pyruvate, phosphate dikinase] + phosphate + H(+) = N(tele)-phospho-L-histidyl/L-threonyl-[pyruvate, phosphate dikinase] + diphosphate. Its function is as follows. Bifunctional serine/threonine kinase and phosphorylase involved in the regulation of the pyruvate, phosphate dikinase (PPDK) by catalyzing its phosphorylation/dephosphorylation. This is Putative pyruvate, phosphate dikinase regulatory protein from Clostridium botulinum (strain ATCC 19397 / Type A).